Consider the following 295-residue polypeptide: Aspartate carbamoyltransferase catalytic subunit (295 aa).

Carbamoyl phosphate contacts are provided by Arg-49 and Thr-50. Lys-77 is a binding site for L-aspartate. Residues Arg-99, His-127, and Gln-130 each contribute to the carbamoyl phosphate site. L-aspartate contacts are provided by Arg-161 and Arg-212. Positions 251 and 252 each coordinate carbamoyl phosphate.

It belongs to the aspartate/ornithine carbamoyltransferase superfamily. ATCase family. In terms of assembly, heterododecamer (2C3:3R2) of six catalytic PyrB chains organized as two trimers (C3), and six regulatory PyrI chains organized as three dimers (R2).

It catalyses the reaction carbamoyl phosphate + L-aspartate = N-carbamoyl-L-aspartate + phosphate + H(+). The protein operates within pyrimidine metabolism; UMP biosynthesis via de novo pathway; (S)-dihydroorotate from bicarbonate: step 2/3. Catalyzes the condensation of carbamoyl phosphate and aspartate to form carbamoyl aspartate and inorganic phosphate, the committed step in the de novo pyrimidine nucleotide biosynthesis pathway. This Campylobacter jejuni subsp. jejuni serotype O:23/36 (strain 81-176) protein is Aspartate carbamoyltransferase catalytic subunit.